The primary structure comprises 591 residues: Calnexin (591 aa).

Residues 1–20 (MEGKWLLCLLLVLGTAAVEA) form the signal peptide. Topologically, residues 21-482 (HDGHDDDAID…QMLEAAEERP (462 aa)) are lumenal. 2 residues coordinate Ca(2+): serine 75 and aspartate 118. Lysine 138 is modified (N6-acetyllysine). Cysteine 161 and cysteine 195 are oxidised to a cystine. An alpha-D-glucoside is bound by residues tyrosine 165, lysine 167, tyrosine 186, and aspartate 193. The interval 261–347 (GNLLNDMTPP…EKPEDWDEDM (87 aa)) is disordered. Positions 275–320 (REIEDPEDRKPEDWDERPKIADPDAVKPDDWDEDAPSKIPDEEATK) are enriched in basic and acidic residues. A p domain (Extended arm) region spans residues 277–410 (IEDPEDRKPE…RKIPNPDFFE (134 aa)). A run of 5 repeats spans residues 279-291 (DPED…WDER), 296-308 (DPDA…WDED), 315-327 (DEEA…WLDD), 334-346 (DPDA…WDED), and 349-359 (GEWEAPQIANP). 4 X approximate repeats stretches follow at residues 279–346 (DPED…WDED) and 349–406 (GEWE…IPNP). Residues 324-347 (WLDDEPEYIPDPDAEKPEDWDEDM) show a composition bias toward acidic residues. The interval 327–360 (DEPEYIPDPDAEKPEDWDEDMDGEWEAPQIANPK) is interaction with PPIB. Residues cysteine 361 and cysteine 367 are joined by a disulfide bond. 3 repeat units span residues 368–378 (GVWQRPMIDNP), 382–392 (GKWKPPMIDNP), and 396–406 (GIWKPRKIPNP). Glutamate 426 is a binding site for an alpha-D-glucoside. Aspartate 437 lines the Ca(2+) pocket. A helical transmembrane segment spans residues 483-503 (WLWVVYILTVALPVFLVILFC). S-palmitoyl cysteine attachment occurs at residues cysteine 503 and cysteine 504. At 504–591 (CSGKKQSNAM…SPRNRKPRRE (88 aa)) the chain is on the cytoplasmic side. A sufficient to mediate interaction with SGIP1 region spans residues 504–591 (CSGKKQSNAM…SPRNRKPRRE (88 aa)). Positions 514 to 539 (EYKKTDAPQPDVKDEEGKEEEKNKRD) are enriched in basic and acidic residues. Residues 514-591 (EYKKTDAPQP…SPRNRKPRRE (78 aa)) are disordered. Serine 553 carries the post-translational modification Phosphoserine. A compositionally biased stretch (acidic residues) spans 555–568 (AEEDGVTGSQDEED). Threonine 561 is subject to Phosphothreonine. Serine 563 carries the phosphoserine; by MAPK3 modification. Position 582 is a phosphoserine (serine 582).

The protein belongs to the calreticulin family. Interacts with MAPK3/ERK1. Interacts with KCNH2. Associates with ribosomes. The palmitoylated form interacts with the ribosome-translocon complex component SSR1, promoting efficient folding of glycoproteins. Interacts with SERPINA2P/SERPINA2 and with the S and Z variants of SERPINA1. Interacts with SGIP1; involved in negative regulation of endocytosis. Interacts with PPIB. Interacts with SMIM22. Interacts with TMX2. Interacts with TMEM35A/NACHO. Interacts with CHRNA7. Interacts with reticulophagy regulators RETREG2 and RETREG3. Interacts with DNM1L; may form part of a larger protein complex at the ER-mitochondrial interface during mitochondrial fission. Interacts with ADAM7. In terms of processing, phosphorylated at Ser-563 by MAPK3/ERK1. Phosphorylation by MAPK3/ERK1 increases its association with ribosomes. Palmitoylation by DHHC6 leads to the preferential localization to the perinuclear rough ER. It mediates the association of calnexin with the ribosome-translocon complex (RTC) which is required for efficient folding of glycosylated proteins. Post-translationally, ubiquitinated, leading to proteasomal degradation. Probably ubiquitinated by ZNRF4. Expressed in sperm (at protein level).

It is found in the endoplasmic reticulum membrane. Its subcellular location is the mitochondrion membrane. The protein resides in the melanosome membrane. In terms of biological role, calcium-binding protein that interacts with newly synthesized monoglucosylated glycoproteins in the endoplasmic reticulum. It may act in assisting protein assembly and/or in the retention within the ER of unassembled protein subunits. It seems to play a major role in the quality control apparatus of the ER by the retention of incorrectly folded proteins. Associated with partial T-cell antigen receptor complexes that escape the ER of immature thymocytes, it may function as a signaling complex regulating thymocyte maturation. Additionally it may play a role in receptor-mediated endocytosis at the synapse. This Mus musculus (Mouse) protein is Calnexin (Canx).